A 528-amino-acid polypeptide reads, in one-letter code: Oxamate amidohydrolase proenzyme (528 aa).

Threonine 342 serves as the catalytic Nucleophile. Position 424 to 425 (424 to 425 (GG)) interacts with substrate.

The protein belongs to the gamma-glutamyltransferase family. In terms of assembly, heterodimer that consists of a 35.5 kDa large (alpha) subunit and a 20 kDa small (beta) subunit, which are synthesized from a single polypeptide. Post-translationally, cleaved by autocatalysis into a large (alpha) and a small (beta) subunit.

The enzyme catalyses oxamate + H2O = oxalate + NH4(+). Its function is as follows. Involved in the uric acid degradation pathway. Catalyzes the conversion of oxamate to oxalate. This chain is Oxamate amidohydrolase proenzyme, found in Klebsiella pneumoniae subsp. pneumoniae (strain ATCC 700721 / MGH 78578).